The chain runs to 328 residues: Neuronal membrane glycoprotein M6-b (328 aa).

Residues 1–22 (MKPAMETAAEENTEQSQERKVN) form a disordered region. Residues 71–91 (GGVPYASLVATILCFSGVALF) traverse the membrane as a helical segment. Asn-113 carries an N-linked (GlcNAc...) asparagine glycan. A run of 2 helical transmembrane segments spans residues 130–150 (VIYG…AEGF) and 176–196 (FVFL…FSAV). The N-linked (GlcNAc...) asparagine glycan is linked to Asn-217. Residues 265-285 (FIVACAGAGATVIALIHFLMI) traverse the membrane as a helical segment. A phosphoserine mark is found at Ser-318, Ser-320, and Ser-326.

This sequence belongs to the myelin proteolipid protein family. Interacts with SERT. As to expression, widely expressed. In the brain, expressed in neurons and oligodendrocytes.

It localises to the membrane. It is found in the cell membrane. Functionally, may be involved in neural development. Involved in regulation of osteoblast function and bone formation. Involved in matrix vesicle release by osteoblasts; this function seems to involve maintenance of the actin cytoskeleton. May be involved in cellular trafficking of SERT and thereby in regulation of serotonin uptake. The chain is Neuronal membrane glycoprotein M6-b (Gpm6b) from Mus musculus (Mouse).